Here is a 415-residue protein sequence, read N- to C-terminus: 3-oxoacyl-[acyl-carrier-protein] synthase 2 (415 aa).

The Ketosynthase family 3 (KS3) domain maps to lysine 3–lysine 412. Active-site for beta-ketoacyl synthase activity residues include cysteine 164, histidine 304, and histidine 342.

This sequence belongs to the thiolase-like superfamily. Beta-ketoacyl-ACP synthases family. Homodimer.

The enzyme catalyses a fatty acyl-[ACP] + malonyl-[ACP] + H(+) = a 3-oxoacyl-[ACP] + holo-[ACP] + CO2. It catalyses the reaction (9Z)-hexadecenoyl-[ACP] + malonyl-[ACP] + H(+) = 3-oxo-(11Z)-octadecenoyl-[ACP] + holo-[ACP] + CO2. The protein operates within lipid metabolism; fatty acid biosynthesis. Functionally, involved in the type II fatty acid elongation cycle. Catalyzes the elongation of a wide range of acyl-ACP by the addition of two carbons from malonyl-ACP to an acyl acceptor. Can efficiently catalyze the conversion of palmitoleoyl-ACP (cis-hexadec-9-enoyl-ACP) to cis-vaccenoyl-ACP (cis-octadec-11-enoyl-ACP), an essential step in the thermal regulation of fatty acid composition. This Vibrio harveyi (Beneckea harveyi) protein is 3-oxoacyl-[acyl-carrier-protein] synthase 2 (fabF).